We begin with the raw amino-acid sequence, 274 residues long: Elongation factor Ts (274 aa).

Residues 79–82 form an involved in Mg(2+) ion dislocation from EF-Tu region; the sequence is TDFV.

The protein belongs to the EF-Ts family.

It localises to the cytoplasm. In terms of biological role, associates with the EF-Tu.GDP complex and induces the exchange of GDP to GTP. It remains bound to the aminoacyl-tRNA.EF-Tu.GTP complex up to the GTP hydrolysis stage on the ribosome. The polypeptide is Elongation factor Ts (Porphyromonas gingivalis (strain ATCC 33277 / DSM 20709 / CIP 103683 / JCM 12257 / NCTC 11834 / 2561)).